Here is a 399-residue protein sequence, read N- to C-terminus: L-asparaginase-like protein GE13669 (399 aa).

Residues 1 to 22 (MLAQSCCLRLLILLLLFKSTCS) form the signal peptide. Intrachain disulfides connect Cys90-Cys95, Cys189-Cys205, and Cys344-Cys371.

The protein belongs to the Ntn-hydrolase family.

In Drosophila yakuba (Fruit fly), this protein is L-asparaginase-like protein GE13669.